A 153-amino-acid polypeptide reads, in one-letter code: D-aminoacyl-tRNA deacylase (153 aa).

The short motif at 137–138 (GP) is the Gly-cisPro motif, important for rejection of L-amino acids element.

It belongs to the DTD family. In terms of assembly, homodimer.

The protein localises to the cytoplasm. The enzyme catalyses glycyl-tRNA(Ala) + H2O = tRNA(Ala) + glycine + H(+). It catalyses the reaction a D-aminoacyl-tRNA + H2O = a tRNA + a D-alpha-amino acid + H(+). Functionally, an aminoacyl-tRNA editing enzyme that deacylates mischarged D-aminoacyl-tRNAs. Also deacylates mischarged glycyl-tRNA(Ala), protecting cells against glycine mischarging by AlaRS. Acts via tRNA-based rather than protein-based catalysis; rejects L-amino acids rather than detecting D-amino acids in the active site. By recycling D-aminoacyl-tRNA to D-amino acids and free tRNA molecules, this enzyme counteracts the toxicity associated with the formation of D-aminoacyl-tRNA entities in vivo and helps enforce protein L-homochirality. The sequence is that of D-aminoacyl-tRNA deacylase from Dehalococcoides mccartyi (strain ATCC BAA-2266 / KCTC 15142 / 195) (Dehalococcoides ethenogenes (strain 195)).